Consider the following 391-residue polypeptide: DNA/RNA-binding protein KIN17 (391 aa).

The C2H2-type zinc finger occupies 28–50; it reads CQMCQKQCRDENGFKCHCMSESH. The interval 51-160 is winged helix-turn-helix (wHTH); sequence QRQLLLASEN…RQLELEKKKK (110 aa). Lys-135 carries the N6,N6,N6-trimethyllysine; by METTL22; alternate modification. Lys-135 is subject to N6-methyllysine; alternate. Coiled-coil stretches lie at residues 147–180 and 252–275; these read ETIR…VRRG and AKKK…TART. Residues 206-258 are disordered; it reads NLNKGAGGSAGATTSKSSSLGPSALKLLGSAASGKRKESSQSSAQPAKKKKSA. Residues 282 to 332 are C-terminal subdomain A; the sequence is GIVVKIITKKLGEKYHKKKGVVKEVIDRYTAVVKMTDSGDRLKLDQTHLET. Positions 338–389 are C-terminal subdomain B; the sequence is GKRVLVLNGGYRGNEGTLESINEKAFSATIVIETGPLKGRRVEGIQYEDISK.

Belongs to the KIN17 family. In terms of assembly, associated with DNA polymerase alpha, RFC1 and cyclin A, in multiprotein DNA replication complexes. Also associates with replication origins at the G1/S phase boundary and throughout the S phase in vivo. In terms of tissue distribution, highly expressed in transformed mouse AtT20 neuroendocrine cells. Expressed at a lower level in testis, kidney, skeletal muscle, liver, lung, spleen, brain and heart and kidney. In testis, expressed at much higher levels in proliferating cells than in differentiating cells. Not detected in embryo.

The protein resides in the nucleus. The protein localises to the cytoplasm. Its function is as follows. Involved in DNA replication and the cellular response to DNA damage. May participate in DNA replication factories and create a bridge between DNA replication and repair mediated by high molecular weight complexes. May play a role in illegitimate recombination and regulation of gene expression. May participate in mRNA processing. Binds, in vitro, to double-stranded DNA. Also shown to bind preferentially to curved DNA in vitro and in vivo. Binds via its C-terminal domain to RNA in vitro. This is DNA/RNA-binding protein KIN17 from Mus musculus (Mouse).